Consider the following 328-residue polypeptide: Fructosamine deglycase FrlB (328 aa).

SIS domains are found at residues 15-153 (FLQD…VLEN) and 181-311 (NAKQ…ELAE).

As to quaternary structure, homooctamer.

Functionally, catalyzes the conversion of a range of fructosamine 6-phosphates to glucose 6-phosphate and a free amino acid. This is Fructosamine deglycase FrlB (frlB) from Bacillus subtilis (strain 168).